A 390-amino-acid polypeptide reads, in one-letter code: Putative F-box protein At3g52320 (390 aa).

Residues 21–71 (VVFLPEIPEEMLIDILIRLPAKSLMRFKCVSKLWLSLITSRYFTNRFFKPS) form the F-box domain.

The chain is Putative F-box protein At3g52320 from Arabidopsis thaliana (Mouse-ear cress).